A 95-amino-acid polypeptide reads, in one-letter code: Progonadoliberin-1 (95 aa).

A signal peptide spans 1–22; the sequence is MAPQTFALWLLLVGTLLGQGCC. Position 23 is a pyrrolidone carboxylic acid (Q23). G32 carries the glycine amide modification.

The protein belongs to the GnRH family.

It is found in the secreted. Its function is as follows. Stimulates the secretion of gonadotropins. The protein is Progonadoliberin-1 (gnrh1) of Morone saxatilis (Striped bass).